Reading from the N-terminus, the 474-residue chain is Gamma-aminobutyric acid receptor subunit beta-2 (474 aa).

An N-terminal signal peptide occupies residues 1 to 25; it reads MWRVRKRGYFGIWSFPLIIAAVCAQ. The Extracellular segment spans residues 26–244; that stretch reads SVNDPSNMSL…SFKLKRNIGY (219 aa). N-linked (GlcNAc...) asparagine glycans are attached at residues N32 and N104. Y121 provides a ligand contact to histamine. A disulfide bond links C160 and C174. Residue N173 is glycosylated (N-linked (GlcNAc...) asparagine). Histamine contacts are provided by residues 180–181 and T226; that span reads SY. 4-aminobutanoate contacts are provided by Y181 and T226. The next 3 helical transmembrane spans lie at 245–266, 270–292, and 304–326; these read FILQ…SFWI, ASAA…NTHL, and AIDM…YALV. Residues 327–451 are Cytoplasmic-facing; it reads NYIFFGRGPQ…DLTDVNAIDR (125 aa). Y403 carries the post-translational modification Phosphotyrosine. Residues 452 to 473 traverse the membrane as a helical segment; the sequence is WSRIFFPVVFSFFNIVYWLYYV.

This sequence belongs to the ligand-gated ion channel (TC 1.A.9) family. Gamma-aminobutyric acid receptor (TC 1.A.9.5) subfamily. GABRB2 sub-subfamily. As to quaternary structure, heteropentamer, formed by a combination of alpha (GABRA1-6), beta (GABRB1-3), gamma (GABRG1-3), delta (GABRD), epsilon (GABRE), rho (GABRR1-3), pi (GABRP) and theta (GABRQ) chains, each subunit exhibiting distinct physiological and pharmacological properties. Interacts with UBQLN1. May interact with KIF21B. Identified in a complex of 720 kDa composed of LHFPL4, NLGN2, GABRA1, GABRB2, GABRG2 and GABRB3. Glycosylated. In terms of tissue distribution, expressed in brain (at protein level), in cerebellar granule cells. Expressed in lungs, in alveolar epithelium.

The protein resides in the postsynaptic cell membrane. It localises to the cell membrane. Its subcellular location is the cytoplasmic vesicle membrane. It carries out the reaction chloride(in) = chloride(out). Allosterically activated by benzodiazepines and the anesthetic etomidate. Inhibited by the antagonist bicuculline. Potentiated by histamine. Its function is as follows. Beta subunit of the heteropentameric ligand-gated chloride channel gated by gamma-aminobutyric acid (GABA), a major inhibitory neurotransmitter in the brain. GABA-gated chloride channels, also named GABA(A) receptors (GABAAR), consist of five subunits arranged around a central pore and contain GABA active binding site(s) located at the alpha and beta subunit interface(s). When activated by GABA, GABAARs selectively allow the flow of chloride anions across the cell membrane down their electrochemical gradient. Chloride influx into the postsynaptic neuron following GABAAR opening decreases the neuron ability to generate a new action potential, thereby reducing nerve transmission. GABAARs containing alpha-1 and beta-2 or -3 subunits exhibit synaptogenic activity; the gamma-2 subunit being necessary but not sufficient to induce rapid synaptic contacts formation. Extrasynaptic beta-2 receptors contribute to the tonic GABAergic inhibition. Beta-containing GABAARs can simultaneously bind GABA and histamine where histamine binds at the interface of two neighboring beta subunits, which may be involved in the regulation of sleep and wakefulness. This chain is Gamma-aminobutyric acid receptor subunit beta-2, found in Rattus norvegicus (Rat).